The primary structure comprises 294 residues: RAB7A-interacting MON1-CCZ1 complex subunit 1 (294 aa).

An N-acetylalanine modification is found at Ala2.

It belongs to the RIMOC1 family. As to quaternary structure, interacts with the MON1A-CCZ1B complex. Interacts with GDP-bound RAB7A and promotes its interaction with the MON1A-CCZ1B complex.

The protein localises to the cytoplasm. The protein resides in the cytosol. Plays an important role in the removal of damaged mitochondria via mitophagy by controlling the stability and localization of RAB7A. Required for the recruitment of RAB7A and ATG9A vesicles to damaged mitochondria and promotes the stability of RAB7A by inhibiting its proteasomal degradation during mitophagy. This chain is RAB7A-interacting MON1-CCZ1 complex subunit 1, found in Mus musculus (Mouse).